The chain runs to 162 residues: MELLAPNLRVVFCGINPGLSSAHQGYPFANGSNRFWKVVHQAGFTDTQLAPEQWQQLQDTGCGITALVARPTVAASEVTRDELLSGGEALKEKILRYQPRALAILGKQAFSSAFGVKNAAWGRQEMTIGKTEVWVLPNPSGLNRATLEQLTESYRELFLALK.

It belongs to the uracil-DNA glycosylase (UDG) superfamily. TDG/mug family. As to quaternary structure, binds DNA as a monomer.

The protein localises to the cytoplasm. The catalysed reaction is Specifically hydrolyzes mismatched double-stranded DNA and polynucleotides, releasing free uracil.. In terms of biological role, excises ethenocytosine and uracil, which can arise by alkylation or deamination of cytosine, respectively, from the corresponding mispairs with guanine in ds-DNA. It is capable of hydrolyzing the carbon-nitrogen bond between the sugar-phosphate backbone of the DNA and the mispaired base. The complementary strand guanine functions in substrate recognition. Required for DNA damage lesion repair in stationary-phase cells. The sequence is that of G/U mismatch-specific DNA glycosylase from Serratia proteamaculans (strain 568).